Consider the following 342-residue polypeptide: Glycerol-1-phosphate dehydrogenase [NAD(P)+] (342 aa).

NAD(+) is bound by residues 84-88 (GRPID) and 106-109 (TSAS). Substrate is bound at residue Asp111. Ser115 is a binding site for NAD(+). Residue Asp160 participates in substrate binding. Residues Asp160 and His241 each coordinate Zn(2+). His245 contributes to the substrate binding site. Residue His260 participates in Zn(2+) binding.

This sequence belongs to the glycerol-1-phosphate dehydrogenase family. In terms of assembly, homodimer. Zn(2+) is required as a cofactor.

Its subcellular location is the cytoplasm. The catalysed reaction is sn-glycerol 1-phosphate + NAD(+) = dihydroxyacetone phosphate + NADH + H(+). It carries out the reaction sn-glycerol 1-phosphate + NADP(+) = dihydroxyacetone phosphate + NADPH + H(+). The protein operates within membrane lipid metabolism; glycerophospholipid metabolism. Functionally, catalyzes the NAD(P)H-dependent reduction of dihydroxyacetonephosphate (DHAP or glycerone phosphate) to glycerol 1-phosphate (G1P). The G1P thus generated is used as the glycerophosphate backbone of phospholipids in the cellular membranes of Archaea. This Pyrobaculum arsenaticum (strain DSM 13514 / JCM 11321 / PZ6) protein is Glycerol-1-phosphate dehydrogenase [NAD(P)+].